Consider the following 101-residue polypeptide: NAD(P)H-quinone oxidoreductase subunit 4L, chloroplastic (101 aa).

Helical transmembrane passes span 2–22, 30–52, and 61–81; these read ILEHVLVLSAYLFSIGIYGLI, ALMCLELLLNSVNLNFVTFSDFF, and IFSIFIIAIAAAEATIGLAIV.

This sequence belongs to the complex I subunit 4L family. In terms of assembly, NDH is composed of at least 16 different subunits, 5 of which are encoded in the nucleus.

It localises to the plastid. The protein localises to the chloroplast thylakoid membrane. The catalysed reaction is a plastoquinone + NADH + (n+1) H(+)(in) = a plastoquinol + NAD(+) + n H(+)(out). It carries out the reaction a plastoquinone + NADPH + (n+1) H(+)(in) = a plastoquinol + NADP(+) + n H(+)(out). NDH shuttles electrons from NAD(P)H:plastoquinone, via FMN and iron-sulfur (Fe-S) centers, to quinones in the photosynthetic chain and possibly in a chloroplast respiratory chain. The immediate electron acceptor for the enzyme in this species is believed to be plastoquinone. Couples the redox reaction to proton translocation, and thus conserves the redox energy in a proton gradient. In Oenothera glazioviana (Large-flowered evening primrose), this protein is NAD(P)H-quinone oxidoreductase subunit 4L, chloroplastic.